Reading from the N-terminus, the 151-residue chain is Coiled-coil-helix-coiled-coil-helix domain-containing protein 2 (151 aa).

2 disordered regions span residues 1–50 (MPRG…AAAP) and 77–111 (GHAI…AQQQ). The span at 10–26 (SRMAPPASRAPQMRAAP) shows a compositional bias: low complexity. Over residues 27-38 (RPAPVAQPPAAA) the composition is skewed to pro residues. 2 stretches are compositionally biased toward low complexity: residues 39–50 (PPSAVGSSAAAP) and 100–111 (QEPQGTQPAQQQ). A CHCH domain is found at 111–151 (QQPCLYEIKQFLECAQNQGDIKLCEGFNEVLKQCRLANGLA). Short sequence motifs (cx9C motif) lie at residues 114–124 (CLYEIKQFLEC) and 134–144 (CEGFNEVLKQC). Cystine bridges form between Cys-114-Cys-144 and Cys-124-Cys-134.

As to quaternary structure, interacts with RBPJ.

It localises to the nucleus. It is found in the mitochondrion. The protein localises to the mitochondrion intermembrane space. Transcription factor. Binds to the oxygen responsive element of COX4I2 and activates its transcription under hypoxia conditions (4% oxygen), as well as normoxia conditions (20% oxygen). The protein is Coiled-coil-helix-coiled-coil-helix domain-containing protein 2 (CHCHD2) of Homo sapiens (Human).